The chain runs to 342 residues: L-threonine 3-dehydrogenase (342 aa).

Cys38 contributes to the Zn(2+) binding site. Residues Thr40 and His43 each act as charge relay system in the active site. Zn(2+) contacts are provided by His63, Glu64, Cys93, Cys96, Cys99, and Cys107. NAD(+)-binding positions include Ile175, Asp195, Arg200, 262 to 264 (LGI), and 286 to 287 (IY).

It belongs to the zinc-containing alcohol dehydrogenase family. Homotetramer. Zn(2+) serves as cofactor.

It is found in the cytoplasm. It carries out the reaction L-threonine + NAD(+) = (2S)-2-amino-3-oxobutanoate + NADH + H(+). It participates in amino-acid degradation; L-threonine degradation via oxydo-reductase pathway; glycine from L-threonine: step 1/2. Its function is as follows. Catalyzes the NAD(+)-dependent oxidation of L-threonine to 2-amino-3-ketobutyrate. The polypeptide is L-threonine 3-dehydrogenase (Burkholderia vietnamiensis (strain G4 / LMG 22486) (Burkholderia cepacia (strain R1808))).